Reading from the N-terminus, the 637-residue chain is Sodium-dependent proline transporter (637 aa).

Residues 1-45 (MKKLQEAHLRKPVTPDLLMTPSDQGDVDLDVDFAADRGNWTGKLD) are Cytoplasmic-facing. A Phosphothreonine modification is found at T20. At S22 the chain carries Phosphoserine. A run of 3 helical transmembrane segments spans residues 46–66 (FLLS…FPYR), 74–93 (AFLV…LFFL), and 117–137 (GAGA…NMII). Residues 138–214 (AYVLFYLFAS…QGIGRPGEIR (77 aa)) lie on the Extracellular side of the membrane. N-linked (GlcNAc...) asparagine glycosylation is present at N182. The next 9 membrane-spanning stretches (helical) occupy residues 215-233 (WNLC…LCIL), 242-259 (VVYF…MLLV), 295-312 (IFYS…FASY), 324-345 (FIVT…FSVL), 378-397 (LPLS…TLGL), 425-443 (VFSG…ILTT), 459-479 (SFGL…VYGI), 500-519 (ACWL…YSIV), and 538-556 (LGIL…GMLV). Residues 557–637 (AVLREEGSLW…IAEEEEESMM (81 aa)) lie on the Cytoplasmic side of the membrane. Phosphoserine is present on residues S573 and S582. Residue T588 is modified to Phosphothreonine. Residue Y591 is modified to Phosphotyrosine. Phosphoserine is present on residues S598 and S600.

Belongs to the sodium:neurotransmitter symporter (SNF) (TC 2.A.22) family. SLC6A7 subfamily. As to expression, expressed in subpopulations of putative glutamatergic pathways of rat brain.

Its subcellular location is the synaptic cell membrane. The enzyme catalyses L-proline(out) + chloride(out) + 2 Na(+)(out) = L-proline(in) + chloride(in) + 2 Na(+)(in). It carries out the reaction L-pipecolate(out) + chloride(out) + 2 Na(+)(out) = L-pipecolate(in) + chloride(in) + 2 Na(+)(in). In terms of biological role, brain specific sodium (and chloride)-dependent proline transporter. Terminates the action of proline by its high affinity sodium-dependent reuptake into presynaptic terminals. In Rattus norvegicus (Rat), this protein is Sodium-dependent proline transporter (Slc6a7).